A 401-amino-acid polypeptide reads, in one-letter code: Probable aspartate/prephenate aminotransferase (401 aa).

Residues glycine 39, tryptophan 125, and asparagine 175 each contribute to the L-aspartate site. Lysine 239 carries the N6-(pyridoxal phosphate)lysine modification. An L-aspartate-binding site is contributed by arginine 375.

Belongs to the class-I pyridoxal-phosphate-dependent aminotransferase family. In terms of assembly, homodimer. Pyridoxal 5'-phosphate serves as cofactor.

It localises to the cytoplasm. It carries out the reaction L-aspartate + 2-oxoglutarate = oxaloacetate + L-glutamate. The catalysed reaction is L-arogenate + 2-oxoglutarate = prephenate + L-glutamate. Catalyzes the reversible conversion of aspartate and 2-oxoglutarate to glutamate and oxaloacetate. Can also transaminate prephenate in the presence of glutamate. The chain is Probable aspartate/prephenate aminotransferase (aatA) from Rickettsia conorii (strain ATCC VR-613 / Malish 7).